Here is a 122-residue protein sequence, read N- to C-terminus: Heat-labile enterotoxin IIB, B chain (122 aa).

A signal peptide spans methionine 1–alanine 23. Cysteine 33 and cysteine 104 are oxidised to a cystine.

As to quaternary structure, heterohexamer of one A chain and of five B chains.

The biological activity of the toxin is produced by the A chain, which activates intracellular adenyl cyclase. In Escherichia coli, this protein is Heat-labile enterotoxin IIB, B chain.